A 373-amino-acid chain; its full sequence is tRNA-specific 2-thiouridylase MnmA (373 aa).

Residues 12 to 19 and M38 contribute to the ATP site; that span reads GMSGGVDS. Residues 98 to 100 form an interaction with target base in tRNA region; it reads NPD. The active-site Nucleophile is the C103. The cysteines at positions 103 and 200 are disulfide-linked. Residue G127 participates in ATP binding. The interval 150–152 is interaction with tRNA; that stretch reads KDQ. C200 serves as the catalytic Cysteine persulfide intermediate. Positions 312 to 313 are interaction with tRNA; that stretch reads RY.

The protein belongs to the MnmA/TRMU family.

It localises to the cytoplasm. It carries out the reaction S-sulfanyl-L-cysteinyl-[protein] + uridine(34) in tRNA + AH2 + ATP = 2-thiouridine(34) in tRNA + L-cysteinyl-[protein] + A + AMP + diphosphate + H(+). Catalyzes the 2-thiolation of uridine at the wobble position (U34) of tRNA, leading to the formation of s(2)U34. This chain is tRNA-specific 2-thiouridylase MnmA, found in Streptococcus pneumoniae serotype 19F (strain G54).